Consider the following 231-residue polypeptide: Nuclear transcription factor Y subunit C-9 (231 aa).

Positions 211 to 231 (NPYMGQPMWQQQAPDQPDQEN) are disordered.

It belongs to the NFYC/HAP5 subunit family. In terms of assembly, heterotrimeric transcription factor composed of three components, NF-YA, NF-YB and NF-YC. Interacts with NFYA2, NFYB2, CO and RGA. Interacts with REF6 (via N-terminus). In terms of tissue distribution, ubiquitous. Present in etiolated seedlings.

The protein localises to the nucleus. Functionally, stimulates the transcription of various genes by recognizing and binding to a CCAAT motif in promoters. Interacts with REF6 to directly regulate SOC1 transcription in response to flowering signals from photoperiod and gibberellic acid pathways. The protein is Nuclear transcription factor Y subunit C-9 (NFYC9) of Arabidopsis thaliana (Mouse-ear cress).